The sequence spans 290 residues: Small ribosomal subunit biogenesis GTPase RsgA (290 aa).

A CP-type G domain is found at 63-220 (KNELIRPPIA…IADTPGFSNL (158 aa)). GTP-binding positions include 112 to 115 (NKFD) and 162 to 170 (GPSGVGKST). The Zn(2+) site is built by cysteine 244, cysteine 249, histidine 251, and cysteine 257.

Belongs to the TRAFAC class YlqF/YawG GTPase family. RsgA subfamily. In terms of assembly, monomer. Associates with 30S ribosomal subunit, binds 16S rRNA. It depends on Zn(2+) as a cofactor.

It localises to the cytoplasm. In terms of biological role, one of several proteins that assist in the late maturation steps of the functional core of the 30S ribosomal subunit. Helps release RbfA from mature subunits. May play a role in the assembly of ribosomal proteins into the subunit. Circularly permuted GTPase that catalyzes slow GTP hydrolysis, GTPase activity is stimulated by the 30S ribosomal subunit. The sequence is that of Small ribosomal subunit biogenesis GTPase RsgA from Carboxydothermus hydrogenoformans (strain ATCC BAA-161 / DSM 6008 / Z-2901).